The following is a 776-amino-acid chain: DNA ligase (776 aa).

NAD(+) contacts are provided by residues 31 to 35 (DAEYD), 80 to 81 (SL), and Glu-112. Lys-114 functions as the N6-AMP-lysine intermediate in the catalytic mechanism. Positions 135, 172, 288, and 312 each coordinate NAD(+). Zn(2+)-binding residues include Cys-406, Cys-409, Cys-436, and Cys-442. The 84-residue stretch at 693-776 (AEGLPLAGQT…TFLAEQGIAV (84 aa)) folds into the BRCT domain.

The protein belongs to the NAD-dependent DNA ligase family. LigA subfamily. Mg(2+) serves as cofactor. The cofactor is Mn(2+).

It carries out the reaction NAD(+) + (deoxyribonucleotide)n-3'-hydroxyl + 5'-phospho-(deoxyribonucleotide)m = (deoxyribonucleotide)n+m + AMP + beta-nicotinamide D-nucleotide.. In terms of biological role, DNA ligase that catalyzes the formation of phosphodiester linkages between 5'-phosphoryl and 3'-hydroxyl groups in double-stranded DNA using NAD as a coenzyme and as the energy source for the reaction. It is essential for DNA replication and repair of damaged DNA. This is DNA ligase from Pseudomonas putida (strain ATCC 700007 / DSM 6899 / JCM 31910 / BCRC 17059 / LMG 24140 / F1).